A 309-amino-acid chain; its full sequence is Glutaminase (309 aa).

The substrate site is built by Ser-64, Asn-114, Glu-160, Asn-167, Tyr-191, Tyr-243, and Val-261.

The protein belongs to the glutaminase family. Homotetramer.

The enzyme catalyses L-glutamine + H2O = L-glutamate + NH4(+). The sequence is that of Glutaminase from Azorhizobium caulinodans (strain ATCC 43989 / DSM 5975 / JCM 20966 / LMG 6465 / NBRC 14845 / NCIMB 13405 / ORS 571).